The following is a 45-amino-acid chain: Thymosin beta (45 aa).

The interval 1–45 (MADKPNMTEITSFDKTKLRKTETQEKNPLPTKETIEQERQGESTP) is disordered. Composition is skewed to basic and acidic residues over residues 12-25 (SFDK…ETQE) and 33-45 (ETIE…ESTP).

It belongs to the thymosin beta family.

The protein localises to the cytoplasm. It localises to the cytoskeleton. Its function is as follows. Plays an important role in the organization of the cytoskeleton. Binds to and sequesters actin monomers (G actin) and therefore inhibits actin polymerization. The sequence is that of Thymosin beta (tmsb) from Danio rerio (Zebrafish).